The chain runs to 542 residues: CTP synthase (542 aa).

An amidoligase domain region spans residues 1 to 265 (MARYVFITGG…DDEVLAAFGI (265 aa)). Ser-13 serves as a coordination point for CTP. Residue Ser-13 participates in UTP binding. ATP is bound by residues 14 to 19 (SLGKGI) and Asp-71. Mg(2+) contacts are provided by Asp-71 and Glu-139. CTP is bound by residues 146-148 (DIE), 186-191 (KTKPTQ), and Lys-222. UTP is bound by residues 186–191 (KTKPTQ) and Lys-222. Residues 291–541 (TIAIVGKYTG…IEAATEQSRL (251 aa)) form the Glutamine amidotransferase type-1 domain. Gly-353 is a binding site for L-glutamine. Residue Cys-380 is the Nucleophile; for glutamine hydrolysis of the active site. L-glutamine contacts are provided by residues 381 to 384 (FGMQ), Glu-404, and Arg-469. Residues His-514 and Glu-516 contribute to the active site.

It belongs to the CTP synthase family. Homotetramer.

It catalyses the reaction UTP + L-glutamine + ATP + H2O = CTP + L-glutamate + ADP + phosphate + 2 H(+). The catalysed reaction is L-glutamine + H2O = L-glutamate + NH4(+). The enzyme catalyses UTP + NH4(+) + ATP = CTP + ADP + phosphate + 2 H(+). Its pathway is pyrimidine metabolism; CTP biosynthesis via de novo pathway; CTP from UDP: step 2/2. Allosterically activated by GTP, when glutamine is the substrate; GTP has no effect on the reaction when ammonia is the substrate. The allosteric effector GTP functions by stabilizing the protein conformation that binds the tetrahedral intermediate(s) formed during glutamine hydrolysis. Inhibited by the product CTP, via allosteric rather than competitive inhibition. In terms of biological role, catalyzes the ATP-dependent amination of UTP to CTP with either L-glutamine or ammonia as the source of nitrogen. Regulates intracellular CTP levels through interactions with the four ribonucleotide triphosphates. This Rhizobium leguminosarum bv. trifolii (strain WSM2304) protein is CTP synthase.